We begin with the raw amino-acid sequence, 165 residues long: UPF0254 protein MmarC7_0182 (165 aa).

The protein belongs to the UPF0254 family.

This is UPF0254 protein MmarC7_0182 from Methanococcus maripaludis (strain C7 / ATCC BAA-1331).